Reading from the N-terminus, the 227-residue chain is tRNA (guanine-N(1)-)-methyltransferase (227 aa).

Residues glycine 112 and 132–137 each bind S-adenosyl-L-methionine; that span reads LGDFVL.

It belongs to the RNA methyltransferase TrmD family. In terms of assembly, homodimer.

Its subcellular location is the cytoplasm. It catalyses the reaction guanosine(37) in tRNA + S-adenosyl-L-methionine = N(1)-methylguanosine(37) in tRNA + S-adenosyl-L-homocysteine + H(+). Specifically methylates guanosine-37 in various tRNAs. The polypeptide is tRNA (guanine-N(1)-)-methyltransferase (Gloeobacter violaceus (strain ATCC 29082 / PCC 7421)).